Reading from the N-terminus, the 391-residue chain is mRNA-capping enzyme subunit alpha (391 aa).

The N6-GMP-lysine intermediate role is filled by Lys-63. Residues 363–391 (KERNRRPRDEDRKRVGGDDHDHGAKRARQ) are disordered.

The protein belongs to the eukaryotic GTase family. In terms of assembly, heterodimer. The mRNA-capping enzyme is composed of two separate chains alpha and beta, respectively a mRNA guanylyltransferase and an mRNA 5'-triphosphate monophosphatase.

It is found in the nucleus. It catalyses the reaction a 5'-end diphospho-ribonucleoside in mRNA + GTP + H(+) = a 5'-end (5'-triphosphoguanosine)-ribonucleoside in mRNA + diphosphate. Its function is as follows. Second step of mRNA capping. Transfer of the GMP moiety of GTP to the 5'-end of RNA via an enzyme-GMP covalent reaction intermediate. The chain is mRNA-capping enzyme subunit alpha (CEG1) from Yarrowia lipolytica (strain CLIB 122 / E 150) (Yeast).